We begin with the raw amino-acid sequence, 548 residues long: Acetolactate synthase isozyme 2 large subunit (548 aa).

Glu-47 lines the thiamine diphosphate pocket. FAD-binding positions include Arg-149, 251 to 272 (HGTKAANFAVQECDLLIAVGAR), and 294 to 313 (DIDPAEMNKLRQAHVALQGD). Residues 377–457 (QHQMWAAQHI…LKIVLLDNQR (81 aa)) form a thiamine pyrophosphate binding region. Residues Asp-428 and Asn-455 each contribute to the Mg(2+) site.

It belongs to the TPP enzyme family. Tetramer of two large (IlvG) and two small (IlvM) chains. FAD serves as cofactor. Mg(2+) is required as a cofactor. It depends on thiamine diphosphate as a cofactor.

The catalysed reaction is 2 pyruvate + H(+) = (2S)-2-acetolactate + CO2. It participates in amino-acid biosynthesis; L-isoleucine biosynthesis; L-isoleucine from 2-oxobutanoate: step 1/4. It functions in the pathway amino-acid biosynthesis; L-valine biosynthesis; L-valine from pyruvate: step 1/4. Its activity is regulated as follows. Inhibited by the herbicides chlorimuron ethyl, chlorsulfuron and imazapyr. Functionally, catalyzes the first step in the biosynthesis of branched-chain amino acids. In Escherichia coli (strain K12), this protein is Acetolactate synthase isozyme 2 large subunit (ilvG).